The sequence spans 155 residues: Small ribosomal subunit protein uS7 (155 aa).

It belongs to the universal ribosomal protein uS7 family. As to quaternary structure, part of the 30S ribosomal subunit. Contacts proteins S9 and S11.

Its function is as follows. One of the primary rRNA binding proteins, it binds directly to 16S rRNA where it nucleates assembly of the head domain of the 30S subunit. Is located at the subunit interface close to the decoding center, probably blocks exit of the E-site tRNA. The chain is Small ribosomal subunit protein uS7 from Corynebacterium glutamicum (strain R).